The chain runs to 451 residues: MGRESVAVVTAPPSATAPGTASVATSLAPGFRFHPTDEELVSYYLKRKVLGQPVRFDAIGEVDIYKHEPWDLAVFSRLKTRDQEWYFYSALDKKYGNGARMNRATNRGYWKATGKDREIRRDILLLGMKKTLVFHSGRAPDGLRTNWVMHEYRLVEYETEKNGNLVQDAYVLCRVFHKNNIGPPSGNRYAPFMEEEWADDEGALIPGIDVKLRLEPPPVANGNDQMDQEIQSASKSLININEPPRETAPLDIESDQQNHHENDLKPEEHNNNNNYDENEETLKREQMEEEERPPRPVCVLNKEAPLPLLQYKRRRQSESNNNSSRNTQDHCSSTTTTVDNTTTLISSSAAATNTAISALLEFSLMGISDKKEKPQQPLRPHKEPLPPQTPLASPEEKVNDLQKEIHQMSVERETFKLEMMSAEAMISILQSRIDALRQENEELKKNNANGQ.

The disordered stretch occupies residues 1 to 21 (MGRESVAVVTAPPSATAPGTA). The NAC domain maps to 27 to 178 (LAPGFRFHPT…AYVLCRVFHK (152 aa)). Residues 126-184 (LGMKKTLVFHSGRAPDGLRTNWVMHEYRLVEYETEKNGNLVQDAYVLCRVFHKNNIGPP) mediate DNA binding. 2 disordered regions span residues 255–337 (DQQN…TTTT) and 370–400 (KKEK…KVND). Basic and acidic residues predominate over residues 256 to 270 (QQNHHENDLKPEEHN). A coiled-coil region spans residues 272–292 (NNNYDENEETLKREQMEEEER). A compositionally biased stretch (low complexity) spans 318-337 (ESNNNSSRNTQDHCSSTTTT). A compositionally biased stretch (basic and acidic residues) spans 370 to 384 (KKEKPQQPLRPHKEP). The stretch at 398 to 446 (VNDLQKEIHQMSVERETFKLEMMSAEAMISILQSRIDALRQENEELKKN) forms a coiled coil.

In terms of assembly, interacts with JMJ14 and NAC050. As to expression, mostly expressed in floral organs, and, at low levels, in other organs.

It is found in the nucleus. Transcriptional repressor that binds to the motif 5'-(C/T)A(C/A)G-3' in the promoter of target genes. Also binds to the 5'-CTTGNNNNNCAAG-3' consensus sequence in chromatin. Can bind to the mitochondrial dysfunction motif (MDM) present in the upstream regions of mitochondrial dysfunction stimulon (MDS) genes involved in mitochondrial retrograde regulation (MRR). Together with NAC050 and JMJ14, regulates gene expression and flowering time by associating with the histone demethylase JMJ14, probably by the promotion of RNA-mediated gene silencing. Regulates siRNA-dependent post-transcriptional gene silencing (PTGS) through SGS3 expression modulation. Required during pollen development. This Arabidopsis thaliana (Mouse-ear cress) protein is NAC domain containing protein 52.